The chain runs to 187 residues: UPF0301 protein YE3428 (187 aa).

The protein belongs to the UPF0301 (AlgH) family.

The polypeptide is UPF0301 protein YE3428 (Yersinia enterocolitica serotype O:8 / biotype 1B (strain NCTC 13174 / 8081)).